Consider the following 156-residue polypeptide: NADH-ubiquinone oxidoreductase chain 6 (156 aa).

The next 5 helical transmembrane spans lie at 1 to 21, 24 to 44, 49 to 69, 77 to 97, and 121 to 141; these read MILT…YLAS, IVLG…FASF, FAFL…AYFL, ISNF…SALT, and STAP…VIVV.

The protein belongs to the complex I subunit 6 family.

It localises to the mitochondrion membrane. It catalyses the reaction a ubiquinone + NADH + 5 H(+)(in) = a ubiquinol + NAD(+) + 4 H(+)(out). In terms of biological role, core subunit of the mitochondrial membrane respiratory chain NADH dehydrogenase (Complex I) that is believed to belong to the minimal assembly required for catalysis. Complex I functions in the transfer of electrons from NADH to the respiratory chain. The immediate electron acceptor for the enzyme is believed to be ubiquinone. The sequence is that of NADH-ubiquinone oxidoreductase chain 6 (ND6) from Lumbricus terrestris (Common earthworm).